The primary structure comprises 98 residues: Integration host factor subunit alpha (98 aa).

The tract at residues 51–71 (NFDLRDKNERPGRNPKTGEDI) is disordered. Positions 53–69 (DLRDKNERPGRNPKTGE) are enriched in basic and acidic residues.

Belongs to the bacterial histone-like protein family. Heterodimer of an alpha and a beta chain.

In terms of biological role, this protein is one of the two subunits of integration host factor, a specific DNA-binding protein that functions in genetic recombination as well as in transcriptional and translational control. The chain is Integration host factor subunit alpha from Vibrio campbellii (strain ATCC BAA-1116).